The chain runs to 113 residues: Protein USP1 (113 aa).

Residues 1–18 (MKITMLFAALSAASGAFA) form the signal peptide. 6 consecutive repeat copies span residues 32-37 (IGAGVG), 40-45 (IGAGVG), 46-49 (PYGY), 50-53 (PYGA), 59-65 (LQLLPLR), and 69-75 (LQWIPLR). The tract at residues 32–45 (IGAGVGIGIGAGVG) is 2 X 6 AA repeats. Positions 46–53 (PYGYPYGA) are 2 X 4 AA approximate tandem repeats. A 2 X 7 AA approximate repeats region spans residues 59 to 75 (LQLLPLRWLSLQWIPLR).

The protein resides in the secreted. In Puccinia graminis (Black stem rust fungus), this protein is Protein USP1 (USP1).